The sequence spans 283 residues: Quinate/shikimate dehydrogenase (NAD(+)) (283 aa).

Residues Ser17, Thr69, Lys73, Asn94, and Asp110 each contribute to the shikimate site. Residues 17 to 19 (SRT), Thr69, Lys73, Asn94, and Asp110 each bind L-quinate. Lys73 functions as the Proton acceptor in the catalytic mechanism. NAD(+) is bound by residues 137–138 (GV), Asp158, Arg163, 203–206 (PMGM), Ala213, Val228, and Gly251. Gln258 contacts shikimate. Position 258 (Gln258) interacts with L-quinate.

The protein belongs to the shikimate dehydrogenase family. As to quaternary structure, homodimer.

The enzyme catalyses L-quinate + NAD(+) = 3-dehydroquinate + NADH + H(+). It catalyses the reaction shikimate + NAD(+) = 3-dehydroshikimate + NADH + H(+). It functions in the pathway metabolic intermediate biosynthesis; chorismate biosynthesis; chorismate from D-erythrose 4-phosphate and phosphoenolpyruvate: step 4/7. It participates in aromatic compound metabolism; 3,4-dihydroxybenzoate biosynthesis; 3-dehydroquinate from D-quinate (NAD(+) route). Functionally, involved in the biosynthesis of the chorismate, which leads to the biosynthesis of aromatic amino acids, and plays a key role in the quinate degradation pathway. Catalyzes the NAD(+)-dependent oxidation of both quinate and shikimate to 3-dehydroquinate and 3-dehydroshikimate, respectively. The protein is Quinate/shikimate dehydrogenase (NAD(+)) of Corynebacterium glutamicum (strain R).